Reading from the N-terminus, the 1133-residue chain is SH3 and PX domain-containing protein 2A (1133 aa).

A PX domain is found at 4–128 (YCVQDATVVD…RFFEARPEDV (125 aa)). Residues 166 to 225 (MILEQYVVVSNYKKQENSELSLQAGEVVDVIEKNESGWWFVSTSEEQGWVPATYLEAQNG) enclose the SH3 1 domain. Residue T256 is modified to Phosphothreonine. The SH3 2 domain maps to 266–325 (SREEKYVTVQPYTSQSKDEIGFEKGVTVEVIRKNLEGWWYIRYLGKEGWAPASYLKKAKD). Residues S406 and S421 each carry the phosphoserine modification. 4 disordered regions span residues 415–446 (QRAQ…PPEP), 505–840 (RKKP…EWEG), 899–924 (NEQP…GKSD), and 941–964 (QSKK…SGTP). The 60-residue stretch at 448-507 (SVEVEYYTIAEFQSCISDGISFRGGQKAEVIDKNSGGWWYVQIGEKEGWAPASYIDKRKK) folds into the SH3 3 domain. A compositionally biased stretch (basic and acidic residues) spans 546 to 555 (DSPRKLKYEE). Residues S547 and S567 each carry the phosphoserine modification. The segment covering 567-576 (SEPELSEEPV) has biased composition (acidic residues). Basic and acidic residues predominate over residues 577–586 (EDRASGERRP). S593 bears the Phosphoserine mark. Acidic residues predominate over residues 608–620 (SSEDVALEEETIY). Composition is skewed to low complexity over residues 634 to 652 (SARG…SLSL), 658 to 670 (PKSG…SLLK), and 686 to 715 (SSAS…SKTS). Position 644 is a phosphoserine (S644). T731 bears the Phosphothreonine mark. Residues S767, S769, and S819 each carry the phosphoserine modification. The residue at position 829 (T829) is a Phosphothreonine. In terms of domain architecture, SH3 4 spans 840 to 899 (GPATSYMTCSAYQKVQDSEISFPAGVEVQVLEKQESGWWYVRFGELEGWAPSHYLVLDEN). A coiled-coil region spans residues 917-946 (RQNEGKSDSLEKIERRVQALNTVNQSKKAT). A phosphoserine mark is found at S1002, S1016, S1017, and S1038. A disordered region spans residues 1029–1059 (KGRLAERAASQGSDSPLLPAQRNSIPVSPVR). Residues 1072-1133 (NLKDVYVSIA…VPSNYLEKKN (62 aa)) enclose the SH3 5 domain.

Belongs to the SH3PXD2 family. In terms of assembly, interacts (via N-terminus) with CYBA. Interacts with ADAM12, ADAM15 and ADAM19. Interacts with NOXO1. Interacts (via SH3 domains) with NOXA1. Interacts with FASLG. Interacts (via PX domain) with RAB40B (GTP-bound); interaction promotes invadopodia-mediated extracellular matrix degradation. Tyrosine phosphorylated by SRC. Phosphorylation plays a regulatory role in the protein localization. The intramolecular interaction of the PX domain with the third SH3 domain maintains the protein in the cytoplasm and phosphorylation disrupts this interaction, resulting in the redistribution of the protein from cytoplasm to the perimembrane region. Phosphorylated on serine upon DNA damage, probably by ATM or ATR. As to expression, found in several cancer cell lines, particularly invasive breast carcinomas and melanomas.

Its subcellular location is the cytoplasm. The protein resides in the cell projection. It is found in the podosome. Adapter protein involved in invadopodia and podosome formation, extracellular matrix degradation and invasiveness of some cancer cells. Binds matrix metalloproteinases (ADAMs), NADPH oxidases (NOXs) and phosphoinositides. Acts as an organizer protein that allows NOX1- or NOX3-dependent reactive oxygen species (ROS) generation and ROS localization. In association with ADAM12, mediates the neurotoxic effect of amyloid-beta peptide. In Homo sapiens (Human), this protein is SH3 and PX domain-containing protein 2A.